A 256-amino-acid polypeptide reads, in one-letter code: 5-keto-4-deoxy-D-glucarate aldolase (256 aa).

The active-site Proton acceptor is His-50. Residue Gln-151 participates in substrate binding. Glu-153 provides a ligand contact to Mg(2+). Residues Ser-178 and Asp-179 each contribute to the substrate site. Asp-179 lines the Mg(2+) pocket.

This sequence belongs to the HpcH/HpaI aldolase family. KDGluc aldolase subfamily. As to quaternary structure, homohexamer; trimer of dimers. Mg(2+) serves as cofactor.

It catalyses the reaction 5-dehydro-4-deoxy-D-glucarate = 2-hydroxy-3-oxopropanoate + pyruvate. The catalysed reaction is 2-dehydro-3-deoxy-D-glucarate = 2-hydroxy-3-oxopropanoate + pyruvate. It functions in the pathway carbohydrate acid metabolism; galactarate degradation; D-glycerate from galactarate: step 2/3. In terms of biological role, catalyzes the reversible retro-aldol cleavage of both 5-keto-4-deoxy-D-glucarate and 2-keto-3-deoxy-D-glucarate to pyruvate and tartronic semialdehyde. In Shigella dysenteriae serotype 1 (strain Sd197), this protein is 5-keto-4-deoxy-D-glucarate aldolase.